The chain runs to 310 residues: Porphobilinogen deaminase (310 aa).

C243 is modified (S-(dipyrrolylmethanemethyl)cysteine).

This sequence belongs to the HMBS family. In terms of assembly, monomer. Dipyrromethane is required as a cofactor.

It carries out the reaction 4 porphobilinogen + H2O = hydroxymethylbilane + 4 NH4(+). It participates in porphyrin-containing compound metabolism; protoporphyrin-IX biosynthesis; coproporphyrinogen-III from 5-aminolevulinate: step 2/4. In terms of biological role, tetrapolymerization of the monopyrrole PBG into the hydroxymethylbilane pre-uroporphyrinogen in several discrete steps. This Methylobacillus flagellatus (strain ATCC 51484 / DSM 6875 / VKM B-1610 / KT) protein is Porphobilinogen deaminase.